Consider the following 505-residue polypeptide: NADH-quinone oxidoreductase subunit N (505 aa).

Helical transmembrane passes span 20-40 (ALAPELVLLVTAVCLMLGDLF), 59-79 (ALALTLSMNFSGGATAFGGVF), 83-103 (GLAAAFKVVCLAALGLTALMS), 115-135 (GEYYSLMAFSTLGMCVMVSAG), 137-157 (AIVLYLGLELMALPIYALVAL), 172-192 (FLMGSFASALLLFGLSILYGL), 220-240 (AVVALGLVLAGLGFKVATVPF), 251-271 (APTTVTAFMSVAAKTASFAVL), 285-305 (LWSDALAGLAVLTMLLGNIAA), 314-334 (MLAYSAIAHAGYALLGLAACT), 342-362 (AAYLTIYLCMNIGAFAVIIYL), 394-414 (LAAVMLVFLFSLTGIPPTAGF), 431-451 (ITVVVAVVCSTISAWYYLGVA), and 481-501 (AVCLAGAVLWGIFPQSLLFWI).

It belongs to the complex I subunit 2 family. NDH-1 is composed of 14 different subunits. Subunits NuoA, H, J, K, L, M, N constitute the membrane sector of the complex.

It localises to the cell inner membrane. The enzyme catalyses a quinone + NADH + 5 H(+)(in) = a quinol + NAD(+) + 4 H(+)(out). NDH-1 shuttles electrons from NADH, via FMN and iron-sulfur (Fe-S) centers, to quinones in the respiratory chain. The immediate electron acceptor for the enzyme in this species is believed to be ubiquinone. Couples the redox reaction to proton translocation (for every two electrons transferred, four hydrogen ions are translocated across the cytoplasmic membrane), and thus conserves the redox energy in a proton gradient. This Desulfovibrio desulfuricans (strain ATCC 27774 / DSM 6949 / MB) protein is NADH-quinone oxidoreductase subunit N.